A 192-amino-acid polypeptide reads, in one-letter code: MHLLMSLFGVLAVMQQQLAVRAAAYIPDSDRNTKTLQNDLQVERDGNYRYAYETSNGISATQEGLGGVSVQGGSSYTSPEGSVISVSYVADETGYHPVGDHIPKVPDYILRALEYIRAHPYQVKDYYTGELKTVAHDAAAFNVYTRNIQDQTTPRSRPSSTPKTIYLTHPPTLSDAPTRRPLRQRQNDSRRR.

Residues 1–15 form the signal peptide; that stretch reads MHLLMSLFGVLAVMQ. The 62-residue stretch at 45 to 106 folds into the Chitin-binding type R&amp;R domain; that stretch reads DGNYRYAYET…PVGDHIPKVP (62 aa). Residues 149–163 are compositionally biased toward polar residues; sequence QDQTTPRSRPSSTPK. Positions 149-192 are disordered; sequence QDQTTPRSRPSSTPKTIYLTHPPTLSDAPTRRPLRQRQNDSRRR.

Functionally, component of the cuticle of the pupa of fruit fly. In Drosophila pseudoobscura pseudoobscura (Fruit fly), this protein is Pupal cuticle protein (Pcp).